The primary structure comprises 335 residues: uncharacterized protein (335 aa).

Disordered regions lie at residues 153–174, 218–239, and 254–295; these read LNDKEDEEKLDQTTESEESDRI, HTSVRRSMSSVSSSASSTQEEV, and RCKV…PVTS. A compositionally biased stretch (acidic residues) spans 156-170; the sequence is KEDEEKLDQTTESEE. Low complexity-rich tracts occupy residues 222 to 234 and 275 to 295; these read RRSMSSVSSSASS and THTSVSSLSVHSVSPTPPVTS.

This is an uncharacterized protein from Caenorhabditis elegans.